The sequence spans 104 residues: MQRLCVYVLILALALATFSEASWKPRSRLQDAPSGPGANRGLEPHGLDQLGPASHHRRQLGLQGPPQLVADLSKKQGPWMEEEEAAYGWMDFGRRSAEEGDQRP.

A signal peptide spans 1-21 (MQRLCVYVLILALALATFSEA). Positions 22–58 (SWKPRSRLQDAPSGPGANRGLEPHGLDQLGPASHHRR) are excised as a propeptide. Positions 22 to 70 (SWKPRSRLQDAPSGPGANRGLEPHGLDQLGPASHHRRQLGLQGPPQLVA) are disordered. Pyrrolidone carboxylic acid occurs at positions 59 and 76. Tyrosine 87 carries the sulfotyrosine modification. The residue at position 92 (phenylalanine 92) is a Phenylalanine amide. Serine 96 is subject to Phosphoserine. A propeptide spanning residues 96 to 104 (SAEEGDQRP) is cleaved from the precursor.

This sequence belongs to the gastrin/cholecystokinin family.

It is found in the secreted. Its function is as follows. Gastrin stimulates the stomach mucosa to produce and secrete hydrochloric acid and the pancreas to secrete its digestive enzymes. It also stimulates smooth muscle contraction and increases blood circulation and water secretion in the stomach and intestine. The polypeptide is Gastrin (GAST) (Canis lupus familiaris (Dog)).